The sequence spans 250 residues: 3-deoxy-manno-octulosonate cytidylyltransferase (250 aa).

This sequence belongs to the KdsB family.

The protein resides in the cytoplasm. It carries out the reaction 3-deoxy-alpha-D-manno-oct-2-ulosonate + CTP = CMP-3-deoxy-beta-D-manno-octulosonate + diphosphate. The protein operates within nucleotide-sugar biosynthesis; CMP-3-deoxy-D-manno-octulosonate biosynthesis; CMP-3-deoxy-D-manno-octulosonate from 3-deoxy-D-manno-octulosonate and CTP: step 1/1. It functions in the pathway bacterial outer membrane biogenesis; lipopolysaccharide biosynthesis. Its function is as follows. Activates KDO (a required 8-carbon sugar) for incorporation into bacterial lipopolysaccharide in Gram-negative bacteria. The chain is 3-deoxy-manno-octulosonate cytidylyltransferase from Janthinobacterium sp. (strain Marseille) (Minibacterium massiliensis).